We begin with the raw amino-acid sequence, 334 residues long: N-chimaerin (334 aa).

Over residues 1 to 10 (MPSKESWSGR) the composition is skewed to polar residues. The tract at residues 1 to 22 (MPSKESWSGRKTNRATVHKSKQ) is disordered. Threonine 67 carries the phosphothreonine modification. The segment at 80–130 (VHNFKVHTFRGPHWCEYCANFMWGLIAQGVKCADCGLNVHKQCSKMVPNDC) adopts a Phorbol-ester/DAG-type zinc-finger fold. A Rho-GAP domain is found at 143 to 334 (CDLTTLVKAH…LLIKNEDILF (192 aa)). Position 215 is a phosphothreonine (threonine 215).

In terms of assembly, interacts with EPHA4; effector of EPHA4 in axon guidance linking EPHA4 activation to RAC1 regulation. Post-translationally, phosphorylated. Phosphorylation is EPHA4 kinase activity-dependent. In neurons in brain regions that are involved in learning and memory processes.

Its function is as follows. GTPase-activating protein for p21-rac and a phorbol ester receptor. Involved in the assembly of neuronal locomotor circuits as a direct effector of EPHA4 in axon guidance. The protein is N-chimaerin (Chn1) of Rattus norvegicus (Rat).